Reading from the N-terminus, the 154-residue chain is Large-conductance mechanosensitive channel (154 aa).

2 helical membrane passes run 14–34 and 86–106; these read VVDL…VNSL and VFIN…FFVV.

This sequence belongs to the MscL family. Homopentamer.

Its subcellular location is the cell membrane. Channel that opens in response to stretch forces in the membrane lipid bilayer. May participate in the regulation of osmotic pressure changes within the cell. This Dehalococcoides mccartyi (strain ATCC BAA-2100 / JCM 16839 / KCTC 5957 / BAV1) protein is Large-conductance mechanosensitive channel.